Reading from the N-terminus, the 1166-residue chain is Pesticidal crystal protein Cry1Ga (1166 aa).

The protein belongs to the delta endotoxin family.

Functionally, promotes colloidosmotic lysis by binding to the midgut epithelial cells of insects. In Bacillus thuringiensis, this protein is Pesticidal crystal protein Cry1Ga (cry1Ga).